A 105-amino-acid chain; its full sequence is Insulin (105 aa).

Positions 1-22 (MAFWLQAASLLVLLALSPGVDA) are cleaved as a signal peptide. Cystine bridges form between C29–C91, C41–C104, and C90–C95. Residues 53–82 (DVDPLIGFLSPKSAKENEEYPFKDQTEMMV) constitute a propeptide, c peptide.

The protein belongs to the insulin family. Heterodimer of a B chain and an A chain linked by two disulfide bonds.

It is found in the secreted. In terms of biological role, insulin decreases blood glucose concentration. It increases cell permeability to monosaccharides, amino acids and fatty acids. It accelerates glycolysis, the pentose phosphate cycle, and glycogen synthesis in liver. This Oncorhynchus keta (Chum salmon) protein is Insulin (ins).